The chain runs to 122 residues: Large ribosomal subunit protein uL14 (122 aa).

The protein belongs to the universal ribosomal protein uL14 family. As to quaternary structure, part of the 50S ribosomal subunit. Forms a cluster with proteins L3 and L19. In the 70S ribosome, L14 and L19 interact and together make contacts with the 16S rRNA in bridges B5 and B8.

Its function is as follows. Binds to 23S rRNA. Forms part of two intersubunit bridges in the 70S ribosome. This chain is Large ribosomal subunit protein uL14, found in Mycobacterium leprae (strain TN).